Consider the following 143-residue polypeptide: Large ribosomal subunit protein uL11 (143 aa).

It belongs to the universal ribosomal protein uL11 family. Part of the ribosomal stalk of the 50S ribosomal subunit. Interacts with L10 and the large rRNA to form the base of the stalk. L10 forms an elongated spine to which L12 dimers bind in a sequential fashion forming a multimeric L10(L12)X complex. Post-translationally, one or more lysine residues are methylated.

Forms part of the ribosomal stalk which helps the ribosome interact with GTP-bound translation factors. The polypeptide is Large ribosomal subunit protein uL11 (Nitrosospira multiformis (strain ATCC 25196 / NCIMB 11849 / C 71)).